Here is a 336-residue protein sequence, read N- to C-terminus: IgLON family member 5 (336 aa).

An N-terminal signal peptide occupies residues M1–S30. Ig-like C2-type domains follow at residues L33–T122, P132–P217, and P218–L307. N-linked (GlcNAc...) asparagine glycans are attached at residues N41, N49, N67, and N137. An intrachain disulfide couples C54 to C112. 2 disulfide bridges follow: C154/C195 and C238/C291. N288 carries an N-linked (GlcNAc...) asparagine glycan.

This sequence belongs to the immunoglobulin superfamily. IgLON family.

It localises to the secreted. This chain is IgLON family member 5 (IGLON5), found in Homo sapiens (Human).